A 291-amino-acid chain; its full sequence is POU class 2 homeobox associating-factor 2 (291 aa).

In terms of domain architecture, OCA spans 7-29 (KRVYQGVRVKHTVKDLLAEKRLR). The segment at 176–219 (AAPVADSPSLAGPDSGSSSPYRLTSGRSGSSIPSSSQPYTLQPL) is disordered. A compositionally biased stretch (low complexity) spans 200–211 (SGRSGSSIPSSS).

This sequence belongs to the POU2AF family.

Its function is as follows. Transcriptional coactivator that may regulate cell type-specific differentiation pathways. The polypeptide is POU class 2 homeobox associating-factor 2 (pou2af2) (Danio rerio (Zebrafish)).